The chain runs to 943 residues: Protein translocase subunit SecA (943 aa).

Residues Gln77, Gly95–Thr99, and Asp484 contribute to the ATP site.

It belongs to the SecA family. As to quaternary structure, monomer and homodimer. Part of the essential Sec protein translocation apparatus which comprises SecA, SecYEG and auxiliary proteins SecDF. Other proteins may also be involved.

The protein localises to the cell membrane. Its subcellular location is the cytoplasm. The enzyme catalyses ATP + H2O + cellular proteinSide 1 = ADP + phosphate + cellular proteinSide 2.. In terms of biological role, part of the Sec protein translocase complex. Interacts with the SecYEG preprotein conducting channel. Has a central role in coupling the hydrolysis of ATP to the transfer of proteins into and across the cell membrane, serving as an ATP-driven molecular motor driving the stepwise translocation of polypeptide chains across the membrane. The protein is Protein translocase subunit SecA of Mesoplasma florum (strain ATCC 33453 / NBRC 100688 / NCTC 11704 / L1) (Acholeplasma florum).